The chain runs to 893 residues: Desmocollin-1 (893 aa).

Residues 1 to 29 (MAVASAAPGSIFWKQLLFSLLVLILFCDA) form the signal peptide. A propeptide spanning residues 30 to 132 (CQKISLQVPS…KDAVLRRTKR (103 aa)) is cleaved from the precursor. 5 Cadherin domains span residues 133–240 (RWAP…APYF), 241–352 (ENKL…APYF), 353–470 (TETS…GPEC), 471–574 (QPPV…DHPP), and 575–682 (QIKQ…LSRE). Over 133 to 692 (RWAPIPCSLM…AALANVFLGK (560 aa)) the chain is Extracellular. N-linked (GlcNAc...) asparagine glycosylation is present at N163. T383 is subject to Phosphothreonine. N398 and N545 each carry an N-linked (GlcNAc...) asparagine glycan. Residues 693 to 715 (WAILAMVLGSVLLLCILFTCFCV) form a helical membrane-spanning segment. Over 716–893 (TVKKTVKKCF…RTLAKTCVKK (178 aa)) the chain is Cytoplasmic.

Binds to JUP/plakoglobin. Post-translationally, isoform 1A is phosphorylated on a serine but isoform 1B is not. Epidermis and weakly in tongue papillae.

It is found in the cell membrane. Its subcellular location is the cell junction. The protein localises to the desmosome. Functionally, a component of desmosome cell-cell junctions which are required for positive regulation of cellular adhesion. Required for desmosome adhesion strength between the granular layers of the epidermis, as a result moderates epidermal proliferation and differentiation. Is therefore required to maintain postnatal epidermal barrier function and normal hair follicle morphology into adulthood. This is Desmocollin-1 (DSC1) from Bos taurus (Bovine).